We begin with the raw amino-acid sequence, 102 residues long: Putative pterin-4-alpha-carbinolamine dehydratase (102 aa).

Belongs to the pterin-4-alpha-carbinolamine dehydratase family.

The enzyme catalyses (4aS,6R)-4a-hydroxy-L-erythro-5,6,7,8-tetrahydrobiopterin = (6R)-L-erythro-6,7-dihydrobiopterin + H2O. The sequence is that of Putative pterin-4-alpha-carbinolamine dehydratase from Psychromonas ingrahamii (strain DSM 17664 / CCUG 51855 / 37).